The chain runs to 92 residues: UPF0223 protein SMU_1141c (92 aa).

It belongs to the UPF0223 family.

The chain is UPF0223 protein SMU_1141c from Streptococcus mutans serotype c (strain ATCC 700610 / UA159).